Reading from the N-terminus, the 347-residue chain is UDP-3-O-acylglucosamine N-acyltransferase 1 (347 aa).

The active-site Proton acceptor is H246.

Belongs to the transferase hexapeptide repeat family. LpxD subfamily. Homotrimer.

The catalysed reaction is a UDP-3-O-[(3R)-3-hydroxyacyl]-alpha-D-glucosamine + a (3R)-hydroxyacyl-[ACP] = a UDP-2-N,3-O-bis[(3R)-3-hydroxyacyl]-alpha-D-glucosamine + holo-[ACP] + H(+). It participates in bacterial outer membrane biogenesis; LPS lipid A biosynthesis. In terms of biological role, catalyzes the N-acylation of UDP-3-O-acylglucosamine using 3-hydroxyacyl-ACP as the acyl donor. Is involved in the biosynthesis of lipid A, a phosphorylated glycolipid that anchors the lipopolysaccharide to the outer membrane of the cell. The sequence is that of UDP-3-O-acylglucosamine N-acyltransferase 1 from Francisella tularensis subsp. tularensis (strain SCHU S4 / Schu 4).